Consider the following 130-residue polypeptide: Small ribosomal subunit protein uS8 (130 aa).

This sequence belongs to the universal ribosomal protein uS8 family. As to quaternary structure, part of the 30S ribosomal subunit. Contacts proteins S5 and S12.

Functionally, one of the primary rRNA binding proteins, it binds directly to 16S rRNA central domain where it helps coordinate assembly of the platform of the 30S subunit. The protein is Small ribosomal subunit protein uS8 of Shewanella sp. (strain MR-7).